Here is a 59-residue protein sequence, read N- to C-terminus: Large ribosomal subunit protein uL30 (59 aa).

It belongs to the universal ribosomal protein uL30 family. As to quaternary structure, part of the 50S ribosomal subunit.

In Nocardia farcinica (strain IFM 10152), this protein is Large ribosomal subunit protein uL30.